We begin with the raw amino-acid sequence, 359 residues long: Outer membrane protein P2 (359 aa).

Positions 1 to 20 are cleaved as a signal peptide; it reads MKKTLAALIVGAFAASAANA.

This sequence belongs to the Gram-negative porin family. In terms of assembly, homotrimer.

It localises to the cell outer membrane. Functionally, forms pores that allow passive diffusion of small molecules across the outer membrane. The protein is Outer membrane protein P2 (ompP2) of Haemophilus influenzae (strain ATCC 51907 / DSM 11121 / KW20 / Rd).